Here is a 106-residue protein sequence, read N- to C-terminus: Large ribosomal subunit protein uL24 (106 aa).

The protein belongs to the universal ribosomal protein uL24 family. Part of the 50S ribosomal subunit.

In terms of biological role, one of two assembly initiator proteins, it binds directly to the 5'-end of the 23S rRNA, where it nucleates assembly of the 50S subunit. Functionally, one of the proteins that surrounds the polypeptide exit tunnel on the outside of the subunit. This chain is Large ribosomal subunit protein uL24, found in Rhodospirillum rubrum (strain ATCC 11170 / ATH 1.1.1 / DSM 467 / LMG 4362 / NCIMB 8255 / S1).